Reading from the N-terminus, the 678-residue chain is DNA ligase (678 aa).

NAD(+)-binding positions include 36–40 (DAEYD), 85–86 (SL), and E117. The active-site N6-AMP-lysine intermediate is the K119. Residues R140, E177, K294, and K318 each coordinate NAD(+). Zn(2+) is bound by residues C412, C415, C430, and C436. Residues 595–678 (ADEQPLNGQT…NLLREHGIEV (84 aa)) enclose the BRCT domain.

Belongs to the NAD-dependent DNA ligase family. LigA subfamily. Mg(2+) serves as cofactor. Mn(2+) is required as a cofactor.

It catalyses the reaction NAD(+) + (deoxyribonucleotide)n-3'-hydroxyl + 5'-phospho-(deoxyribonucleotide)m = (deoxyribonucleotide)n+m + AMP + beta-nicotinamide D-nucleotide.. DNA ligase that catalyzes the formation of phosphodiester linkages between 5'-phosphoryl and 3'-hydroxyl groups in double-stranded DNA using NAD as a coenzyme and as the energy source for the reaction. It is essential for DNA replication and repair of damaged DNA. This Marinobacter nauticus (strain ATCC 700491 / DSM 11845 / VT8) (Marinobacter aquaeolei) protein is DNA ligase.